We begin with the raw amino-acid sequence, 351 residues long: Homocitrate synthase (351 aa).

The region spanning Ile-23–Ser-272 is the Pyruvate carboxyltransferase domain.

This sequence belongs to the alpha-IPM synthase/homocitrate synthase family.

The enzyme catalyses acetyl-CoA + 2-oxoglutarate + H2O = (2R)-homocitrate + CoA + H(+). In terms of biological role, this protein is a Fe-Mo-cofactor biosynthetic component. The polypeptide is Homocitrate synthase (nifV) (Frankia alni).